A 521-amino-acid chain; its full sequence is Ribonuclease Y (521 aa).

Residues 10 to 30 (LIITAGVSIALAIVAFFLGYL) form a helical membrane-spanning segment. Residues 210–270 (TVSVVTLPND…IRREIAKLTL (61 aa)) form the KH domain. Positions 336–430 (VLAHSIEVAN…IQAADSVSAA (95 aa)) constitute an HD domain.

Belongs to the RNase Y family.

Its subcellular location is the cell membrane. Functionally, endoribonuclease that initiates mRNA decay. This chain is Ribonuclease Y, found in Caldicellulosiruptor saccharolyticus (strain ATCC 43494 / DSM 8903 / Tp8T 6331).